The sequence spans 438 residues: UDP-N-acetylmuramoylalanine--D-glutamate ligase (438 aa).

112-118 contacts ATP; that stretch reads GSNGKST.

It belongs to the MurCDEF family.

It is found in the cytoplasm. The catalysed reaction is UDP-N-acetyl-alpha-D-muramoyl-L-alanine + D-glutamate + ATP = UDP-N-acetyl-alpha-D-muramoyl-L-alanyl-D-glutamate + ADP + phosphate + H(+). Its pathway is cell wall biogenesis; peptidoglycan biosynthesis. Cell wall formation. Catalyzes the addition of glutamate to the nucleotide precursor UDP-N-acetylmuramoyl-L-alanine (UMA). The polypeptide is UDP-N-acetylmuramoylalanine--D-glutamate ligase (Shigella boydii serotype 4 (strain Sb227)).